Here is a 379-residue protein sequence, read N- to C-terminus: Glutamate 5-kinase (379 aa).

Position 20 (Lys-20) interacts with ATP. 3 residues coordinate substrate: Ser-59, Asp-146, and Asn-158. 220 to 226 (SGGMYSK) provides a ligand contact to ATP. The PUA domain occupies 285 to 362 (TGSVVVDDGA…AELTAILGDN (78 aa)).

It belongs to the glutamate 5-kinase family.

The protein localises to the cytoplasm. It catalyses the reaction L-glutamate + ATP = L-glutamyl 5-phosphate + ADP. The protein operates within amino-acid biosynthesis; L-proline biosynthesis; L-glutamate 5-semialdehyde from L-glutamate: step 1/2. Functionally, catalyzes the transfer of a phosphate group to glutamate to form L-glutamate 5-phosphate. This is Glutamate 5-kinase from Oleidesulfovibrio alaskensis (strain ATCC BAA-1058 / DSM 17464 / G20) (Desulfovibrio alaskensis).